We begin with the raw amino-acid sequence, 88 residues long: EMBRYO SURROUNDING FACTOR 1-like protein 3 (88 aa).

An N-terminal signal peptide occupies residues 1–22 (MKLSQIALICIVIASLFAMHEC). 3 disulfide bridges follow: Cys41–Cys56, Cys54–Cys80, and Cys57–Cys67.

The protein belongs to the MEG family. Expressed in stems, leaves and flowers.

This Arabidopsis thaliana (Mouse-ear cress) protein is EMBRYO SURROUNDING FACTOR 1-like protein 3 (ESFL3).